The primary structure comprises 164 residues: 3-isopropylmalate dehydratase small subunit 2 (164 aa).

It belongs to the LeuD family. LeuD type 2 subfamily. Heterodimer of LeuC and LeuD.

The catalysed reaction is (2R,3S)-3-isopropylmalate = (2S)-2-isopropylmalate. It participates in amino-acid biosynthesis; L-leucine biosynthesis; L-leucine from 3-methyl-2-oxobutanoate: step 2/4. Functionally, catalyzes the isomerization between 2-isopropylmalate and 3-isopropylmalate, via the formation of 2-isopropylmaleate. In Pyrococcus furiosus (strain ATCC 43587 / DSM 3638 / JCM 8422 / Vc1), this protein is 3-isopropylmalate dehydratase small subunit 2 (leuD2).